Consider the following 310-residue polypeptide: Methionyl-tRNA formyltransferase (310 aa).

106-109 (SLLP) serves as a coordination point for (6S)-5,6,7,8-tetrahydrofolate.

Belongs to the Fmt family.

The enzyme catalyses L-methionyl-tRNA(fMet) + (6R)-10-formyltetrahydrofolate = N-formyl-L-methionyl-tRNA(fMet) + (6S)-5,6,7,8-tetrahydrofolate + H(+). In terms of biological role, attaches a formyl group to the free amino group of methionyl-tRNA(fMet). The formyl group appears to play a dual role in the initiator identity of N-formylmethionyl-tRNA by promoting its recognition by IF2 and preventing the misappropriation of this tRNA by the elongation apparatus. This is Methionyl-tRNA formyltransferase from Fervidobacterium nodosum (strain ATCC 35602 / DSM 5306 / Rt17-B1).